A 1571-amino-acid polypeptide reads, in one-letter code: Phosphatidylinositol 3-kinase 1 (1571 aa).

The segment covering 1–73 (MNSIESSSND…NNDNNNNNNN (73 aa)) has biased composition (low complexity). Disordered regions lie at residues 1 to 119 (MNSI…HVNN), 157 to 195 (GYDV…RTRN), and 283 to 430 (NSKL…IIKR). The span at 74-85 (IDKKRKDSKNKQ) shows a compositional bias: basic and acidic residues. A compositionally biased stretch (low complexity) spans 101 to 119 (NSNDSNCSSGSSSGGHVNN). Over residues 283–292 (NSKLDTEEKP) the composition is skewed to basic and acidic residues. The span at 294 to 324 (TTTTTTTTTSTSISTSTPTTTTTTTTNTSTT) shows a compositional bias: low complexity. Residues 325–337 (NDITIKPKTSPTK) are compositionally biased toward polar residues. 2 stretches are compositionally biased toward low complexity: residues 360–382 (KVST…PTGK) and 405–424 (NNTN…NNNN). One can recognise a PI3K-ABD domain in the interval 530–627 (IKTSFNILFL…IPKLKVIEKS (98 aa)). The region spanning 700-789 (GNKILISIFL…GTKPQLTLIQ (90 aa)) is the PI3K-RBD domain. The 170-residue stretch at 851–1020 (IKKPFRVKVM…GLTLEFEEFN (170 aa)) folds into the C2 PI3K-type domain. One can recognise a PIK helical domain in the interval 1040–1216 (QPPTNINSNE…GILLESYLYA (177 aa)). The PI3K/PI4K catalytic domain maps to 1280 to 1558 (IINKSKYMDS…LIHESLATKT (279 aa)). Residues 1286 to 1292 (YMDSKKL) form a G-loop region. The catalytic loop stretch occupies residues 1424-1432 (GIGDRHNDN). The tract at residues 1443 to 1469 (HIDFGHFLGNYKKKFGFKRERAPFVFT) is activation loop.

It belongs to the PI3/PI4-kinase family.

It carries out the reaction a 1,2-diacyl-sn-glycero-3-phospho-(1D-myo-inositol) + ATP = a 1,2-diacyl-sn-glycero-3-phospho-(1D-myo-inositol-3-phosphate) + ADP + H(+). The sequence is that of Phosphatidylinositol 3-kinase 1 (pikA) from Dictyostelium discoideum (Social amoeba).